The sequence spans 813 residues: MSKLSFRARALDASKPLPVFRCEDLPDLHEYASINRAVPQMPTGMEKEEESEHHLQRAISAQQVYGEKRDNMVIPVPEAESNIAYYESIYPGEFRMPKQLIHIQPFSLDAEQPDYDLDSEDEVFVNKLKKKMDICPLQFEEMIDRLEKGSGQQPVSLQEAKLLLKEDDELIREVYEYWIKKRKTCRGSSLIPLVKQEKRDGSSTNDPYVAFRRRTEKMQTRKNRKNDEASYEKMLKLRRDLSRAVTILEMIKRREKSKRELLHLTLEIMEKRYNLGDYSGEIMSEVMAQRQPVKPTYAIPIIPITNSSQFKHQDATDSKEFKVNKQDKADLIRPKRKYEKKPKVLPPSAAAPQQQSPAALPGFSAKDLNQYDFPSSDEEPLSQVLSGSSEAEEENDPDGPFAFRRKAGCQYYAPHLDQTGNWPWTSPKDGGLGDVRYRYCLTTLTVPQRCLGFARRRVGRGGRVVLDRAHSDYDSMFHHLDLDMLSSPQPSPVNQFANTSEPNTSDRSSSKDLSQILVDIKSCRWRHFRPRTPSLPDSDSGELSSRKLHRSISRAGAAQPGAHTCSTSTQNRSSSGSAHCAFTAEQYQQHQQQLALMQQQQLAQTQQQQQANSSSSAAAQQGFVSKTLDSASAQFAASALMTSEQLLGFKVKDDVVLGLGVNGVLPASGVYKGLHLSSTTPTALVHTSPSTAGSTLLQPSNITQTSGSHSSLSHQVTAASSATTQVLFGNNIRLTVPSSVPTVNSVTPINARHIPRTLSAVPPSALKLAAAANCQVSKVPSSSSVDSVPRENHESEKPALNNIADNTVAMEVT.

Disordered stretches follow at residues 310–403, 484–513, and 528–577; these read FKHQ…PFAF, MLSS…SKDL, and FRPR…SSGS. Residues 311 to 333 are compositionally biased toward basic and acidic residues; the sequence is KHQDATDSKEFKVNKQDKADLIR. Lys-319 participates in a covalent cross-link: Glycyl lysine isopeptide (Lys-Gly) (interchain with G-Cter in SUMO2). Positions 346 to 361 are enriched in low complexity; sequence PPSAAAPQQQSPAALP. A compositionally biased stretch (polar residues) spans 486–513; sequence SSPQPSPVNQFANTSEPNTSDRSSSKDL. Ser-538 carries the phosphoserine modification. Residues 564 to 577 are compositionally biased toward low complexity; it reads TCSTSTQNRSSSGS. Residue Lys-650 forms a Glycyl lysine isopeptide (Lys-Gly) (interchain with G-Cter in SUMO2) linkage. A disordered region spans residues 779–813; sequence VPSSSSVDSVPRENHESEKPALNNIADNTVAMEVT. Basic and acidic residues predominate over residues 788–797; sequence VPRENHESEK.

It belongs to the enhancer of polycomb family. Component of the NuA4 histone acetyltransferase complex which contains the catalytic subunit KAT5/TIP60 and the subunits EP400, TRRAP/PAF400, BRD8/SMAP, EPC1, DMAP1/DNMAP1, RUVBL1/TIP49, RUVBL2, ING3, actin, ACTL6A/BAF53A, MORF4L1/MRG15, MORF4L2/MRGX, MRGBP, YEATS4/GAS41, VPS72/YL1 and MEAF6. KAT5/TIP60, EPC1, and ING3 together constitute a minimal HAT complex termed Piccolo NuA4. Component of a NuA4-related complex which contains EP400, TRRAP/PAF400, SRCAP, BRD8/SMAP, EPC1, DMAP1/DNMAP1, RUVBL1/TIP49, RUVBL2, actin, ACTL6A/BAF53A, VPS72 and YEATS4/GAS41. Interacts with TRIM27. Interacts with MBTD1; interaction is direct and promotes recruitment of MBTD1 into the NuA4 histone acetyltransferase complex. As to expression, expressed in adult brain, heart, kidney, liver, lung, skeletal muscle and testis. Expressed in male germ cells, present in round spermatids of steps 1 to 4.

The protein localises to the nucleus. It is found in the cytoplasm. In terms of biological role, component of the NuA4 histone acetyltransferase (HAT) complex, a multiprotein complex involved in transcriptional activation of select genes principally by acetylation of nucleosomal histones H4 and H2A. The NuA4 complex plays a direct role in repair of DNA double-strand breaks (DSBs) by promoting homologous recombination (HR). The NuA4 complex is also required for spermatid development by promoting acetylation of histones: histone acetylation is required for histone replacement during the transition from round to elongating spermatids. In the NuA4 complex, EPC1 is required to recruit MBTD1 into the complex. This Mus musculus (Mouse) protein is Enhancer of polycomb homolog 1.